We begin with the raw amino-acid sequence, 328 residues long: 4-hydroxy-3-methylbut-2-enyl diphosphate reductase (328 aa).

A [4Fe-4S] cluster-binding site is contributed by Cys-24. (2E)-4-hydroxy-3-methylbut-2-enyl diphosphate is bound by residues His-55 and His-88. Dimethylallyl diphosphate-binding residues include His-55 and His-88. Residues His-55 and His-88 each coordinate isopentenyl diphosphate. Cys-110 is a [4Fe-4S] cluster binding site. His-138 is a (2E)-4-hydroxy-3-methylbut-2-enyl diphosphate binding site. His-138 serves as a coordination point for dimethylallyl diphosphate. His-138 contacts isopentenyl diphosphate. Glu-140 functions as the Proton donor in the catalytic mechanism. Thr-178 is a (2E)-4-hydroxy-3-methylbut-2-enyl diphosphate binding site. Cys-208 contributes to the [4Fe-4S] cluster binding site. Residues Ser-236, Ser-237, Asn-238, and Ser-279 each contribute to the (2E)-4-hydroxy-3-methylbut-2-enyl diphosphate site. The dimethylallyl diphosphate site is built by Ser-236, Ser-237, Asn-238, and Ser-279. The isopentenyl diphosphate site is built by Ser-236, Ser-237, Asn-238, and Ser-279.

The protein belongs to the IspH family. [4Fe-4S] cluster serves as cofactor.

The catalysed reaction is isopentenyl diphosphate + 2 oxidized [2Fe-2S]-[ferredoxin] + H2O = (2E)-4-hydroxy-3-methylbut-2-enyl diphosphate + 2 reduced [2Fe-2S]-[ferredoxin] + 2 H(+). The enzyme catalyses dimethylallyl diphosphate + 2 oxidized [2Fe-2S]-[ferredoxin] + H2O = (2E)-4-hydroxy-3-methylbut-2-enyl diphosphate + 2 reduced [2Fe-2S]-[ferredoxin] + 2 H(+). The protein operates within isoprenoid biosynthesis; dimethylallyl diphosphate biosynthesis; dimethylallyl diphosphate from (2E)-4-hydroxy-3-methylbutenyl diphosphate: step 1/1. It functions in the pathway isoprenoid biosynthesis; isopentenyl diphosphate biosynthesis via DXP pathway; isopentenyl diphosphate from 1-deoxy-D-xylulose 5-phosphate: step 6/6. Functionally, catalyzes the conversion of 1-hydroxy-2-methyl-2-(E)-butenyl 4-diphosphate (HMBPP) into a mixture of isopentenyl diphosphate (IPP) and dimethylallyl diphosphate (DMAPP). Acts in the terminal step of the DOXP/MEP pathway for isoprenoid precursor biosynthesis. The sequence is that of 4-hydroxy-3-methylbut-2-enyl diphosphate reductase from Ehrlichia ruminantium (strain Welgevonden).